Consider the following 347-residue polypeptide: Probable ribonucleotide transport ATP-binding protein mkl (347 aa).

In terms of domain architecture, ABC transporter spans 16 to 252 (IEVKGLTKSF…DEPVVRQFLN (237 aa)). ATP is bound at residue 48 to 55 (GPSGTGKS).

It belongs to the ABC transporter superfamily.

Functionally, not known, could be involved in the transport of ribonucleotides. The protein is Probable ribonucleotide transport ATP-binding protein mkl (mkl) of Mycobacterium leprae (strain TN).